The primary structure comprises 75 residues: Alpha-amylase inhibitor Paim-2 (75 aa).

Cystine bridges form between Cys-10–Cys-26 and Cys-44–Cys-72.

Inhibits mammalian alpha-amylases specifically but has no action on plant and microbial alpha-amylases. The sequence is that of Alpha-amylase inhibitor Paim-2 from Streptomyces olivaceoviridis (Streptomyces corchorusii).